Consider the following 243-residue polypeptide: Probable transcriptional regulatory protein Smal_3128 (243 aa).

It belongs to the TACO1 family.

The protein localises to the cytoplasm. This is Probable transcriptional regulatory protein Smal_3128 from Stenotrophomonas maltophilia (strain R551-3).